The primary structure comprises 534 residues: CTP synthase (534 aa).

The tract at residues 1 to 269 is amidoligase domain; that stretch reads MHVSNSKFIF…DKIIIDAFRL (269 aa). Ser17 is a CTP binding site. A UTP-binding site is contributed by Ser17. Residue 18 to 23 coordinates ATP; it reads SLGKGV. Tyr58 contacts L-glutamine. Asp75 provides a ligand contact to ATP. Positions 75 and 143 each coordinate Mg(2+). Residues 150-152, 190-195, and Lys226 contribute to the CTP site; these read DIE and KTKPTQ. Residues 190-195 and Lys226 contribute to the UTP site; that span reads KTKPTQ. Residues 294–532 form the Glutamine amidotransferase type-1 domain; it reads DIAIVGKYIK…IENAYIYKKE (239 aa). Gly352 lines the L-glutamine pocket. Cys379 functions as the Nucleophile; for glutamine hydrolysis in the catalytic mechanism. Residues 380–383, Glu403, and Arg460 contribute to the L-glutamine site; that span reads LGMQ. Residues His505 and Glu507 contribute to the active site.

Belongs to the CTP synthase family. In terms of assembly, homotetramer.

The catalysed reaction is UTP + L-glutamine + ATP + H2O = CTP + L-glutamate + ADP + phosphate + 2 H(+). It carries out the reaction L-glutamine + H2O = L-glutamate + NH4(+). It catalyses the reaction UTP + NH4(+) + ATP = CTP + ADP + phosphate + 2 H(+). Its pathway is pyrimidine metabolism; CTP biosynthesis via de novo pathway; CTP from UDP: step 2/2. Allosterically activated by GTP, when glutamine is the substrate; GTP has no effect on the reaction when ammonia is the substrate. The allosteric effector GTP functions by stabilizing the protein conformation that binds the tetrahedral intermediate(s) formed during glutamine hydrolysis. Inhibited by the product CTP, via allosteric rather than competitive inhibition. Catalyzes the ATP-dependent amination of UTP to CTP with either L-glutamine or ammonia as the source of nitrogen. Regulates intracellular CTP levels through interactions with the four ribonucleotide triphosphates. This Hydrogenobaculum sp. (strain Y04AAS1) protein is CTP synthase.